Reading from the N-terminus, the 157-residue chain is Endoribonuclease YbeY (157 aa).

Zn(2+) contacts are provided by His-122, His-126, and His-132.

Belongs to the endoribonuclease YbeY family. Requires Zn(2+) as cofactor.

Its subcellular location is the cytoplasm. Single strand-specific metallo-endoribonuclease involved in late-stage 70S ribosome quality control and in maturation of the 3' terminus of the 16S rRNA. The protein is Endoribonuclease YbeY of Bacillus velezensis (strain DSM 23117 / BGSC 10A6 / LMG 26770 / FZB42) (Bacillus amyloliquefaciens subsp. plantarum).